Here is a 327-residue protein sequence, read N- to C-terminus: Tagatose 1,6-diphosphate aldolase 2 (327 aa).

It belongs to the aldolase LacD family.

It carries out the reaction D-tagatofuranose 1,6-bisphosphate = D-glyceraldehyde 3-phosphate + dihydroxyacetone phosphate. It functions in the pathway carbohydrate metabolism; D-tagatose 6-phosphate degradation; D-glyceraldehyde 3-phosphate and glycerone phosphate from D-tagatose 6-phosphate: step 2/2. The polypeptide is Tagatose 1,6-diphosphate aldolase 2 (lacD2) (Streptococcus pyogenes serotype M1).